A 439-amino-acid polypeptide reads, in one-letter code: Trigger factor (439 aa).

Residues 163–248 (GDRVTIDYRG…LNKLEAPKLP (86 aa)) enclose the PPIase FKBP-type domain.

It belongs to the FKBP-type PPIase family. Tig subfamily.

The protein resides in the cytoplasm. The catalysed reaction is [protein]-peptidylproline (omega=180) = [protein]-peptidylproline (omega=0). Involved in protein export. Acts as a chaperone by maintaining the newly synthesized protein in an open conformation. Functions as a peptidyl-prolyl cis-trans isomerase. This chain is Trigger factor, found in Nitrosomonas europaea (strain ATCC 19718 / CIP 103999 / KCTC 2705 / NBRC 14298).